The chain runs to 258 residues: Synapse differentiation-inducing gene protein 1 (258 aa).

Topologically, residues 1–181 are cytoplasmic; it reads MDGIIEQKSM…NFLMMPPRDH (181 aa). At S137 the chain carries Phosphoserine. Residues 182–202 form a helical membrane-spanning segment; that stretch reads LGLSVFSMLCCFWPLGIAAFY. Residues 203-228 lie on the Extracellular side of the membrane; it reads LSHETNKAVAKGDLHQASTSSRRALF. The segment at residues 229 to 249 is an intramembrane region (helical); the sequence is LAVLSITIGTGVYVGVAVALI. Residues 250-258 are Extracellular-facing; the sequence is AYLSKNNHL.

This sequence belongs to the CD225/Dispanin family. As to quaternary structure, homodimer. Interacts with GRIA1 and GRIA2.

Its subcellular location is the cell membrane. It localises to the early endosome membrane. It is found in the postsynaptic density membrane. The protein resides in the synapse. The protein localises to the cell projection. Its subcellular location is the dendrite. It localises to the dendritic spine. Its function is as follows. May regulate AMPA receptor content at nascent synapses, and have a role in postsynaptic development and maturation. The chain is Synapse differentiation-inducing gene protein 1 (SYNDIG1) from Macaca fascicularis (Crab-eating macaque).